A 178-amino-acid chain; its full sequence is ATP synthase subunit delta (178 aa).

This sequence belongs to the ATPase delta chain family. As to quaternary structure, F-type ATPases have 2 components, F(1) - the catalytic core - and F(0) - the membrane proton channel. F(1) has five subunits: alpha(3), beta(3), gamma(1), delta(1), epsilon(1). F(0) has three main subunits: a(1), b(2) and c(10-14). The alpha and beta chains form an alternating ring which encloses part of the gamma chain. F(1) is attached to F(0) by a central stalk formed by the gamma and epsilon chains, while a peripheral stalk is formed by the delta and b chains.

The protein resides in the cell inner membrane. In terms of biological role, f(1)F(0) ATP synthase produces ATP from ADP in the presence of a proton or sodium gradient. F-type ATPases consist of two structural domains, F(1) containing the extramembraneous catalytic core and F(0) containing the membrane proton channel, linked together by a central stalk and a peripheral stalk. During catalysis, ATP synthesis in the catalytic domain of F(1) is coupled via a rotary mechanism of the central stalk subunits to proton translocation. Its function is as follows. This protein is part of the stalk that links CF(0) to CF(1). It either transmits conformational changes from CF(0) to CF(1) or is implicated in proton conduction. In Pseudomonas entomophila (strain L48), this protein is ATP synthase subunit delta.